A 23-amino-acid polypeptide reads, in one-letter code: Potassium channel toxin alpha-KTx 13.4 (23 aa).

3 disulfide bridges follow: Cys-2-Cys-15, Cys-5-Cys-20, and Cys-9-Cys-22. An interaction with Ca(2+)-activated K(+) channels region spans residues Gly-13–Cys-20. Residue Tyr-23 is modified to Tyrosine amide.

Expressed by the venom gland.

The protein resides in the secreted. Its function is as follows. Blocks the potassium channel Shaker B. The polypeptide is Potassium channel toxin alpha-KTx 13.4 (Tityus stigmurus (Brazilian scorpion)).